A 457-amino-acid chain; its full sequence is Multidrug resistance protein MdtK (457 aa).

At 1–10 (MQKYISEARL) the chain is on the cytoplasmic side. A helical membrane pass occupies residues 11 to 31 (LLALAIPVILAQIAQTAMGFV). The Periplasmic portion of the chain corresponds to 32–52 (DTVMAGGYSATDMAAVAIGTS). Residues 53–73 (IWLPAILFGHGLLLALTPVIA) form a helical membrane-spanning segment. The Cytoplasmic portion of the chain corresponds to 74–92 (QLNGSGRRERIAHQVRQGF). A helical transmembrane segment spans residues 93 to 113 (WLAGFVSVLIMLVLWNAGYII). The Periplasmic portion of the chain corresponds to 114–126 (RYMENIDPALADK). Residues 127–147 (AVGYLRALLWGAPGYLFFQVA) form a helical membrane-spanning segment. At 148–159 (RNQCEGLAKAKP) the chain is on the cytoplasmic side. Residues 160 to 180 (GMVMGFIGLLVNIPVNYIFIY) traverse the membrane as a helical segment. Over 181-188 (GHFGMPEL) the chain is Periplasmic. A helical membrane pass occupies residues 189 to 209 (GGVGCGVATAAVYWVMFLAMV). Residues 210–242 (SYIKRARSMRDIRNEKGTAKPEPAVMKRLIQLG) lie on the Cytoplasmic side of the membrane. Residues 243-263 (LPIALALFLEVTLFAVVALLV) traverse the membrane as a helical segment. Residues 264-275 (SPLGIVDVAGHQ) lie on the Periplasmic side of the membrane. Residues 276–296 (IALNFSSLMFVLPMSLAAAVT) form a helical membrane-spanning segment. The Cytoplasmic portion of the chain corresponds to 297 to 313 (IRVGYRLGQGSTLDAQT). Residues 314 to 334 (AARTGLMVGVCMATLTAIFTV) form a helical membrane-spanning segment. Over 335–349 (SLREQIALLYNDNPE) the chain is Periplasmic. The helical transmembrane segment at 350 to 370 (VVTLAAHLMLLAAVYQISDSI) threads the bilayer. Residues 371–386 (QVIGSGILRGYKDTRS) lie on the Cytoplasmic side of the membrane. Residues 387-407 (IFYITFTAYWVLGLPSGYILA) form a helical membrane-spanning segment. At 408 to 417 (LTDLVVEPMG) the chain is on the periplasmic side. The helical transmembrane segment at 418–438 (PAGFWIGFIIGLTSAAIMMML) threads the bilayer. Residues 439-457 (RMRFLQRMPSAIILQRASR) are Cytoplasmic-facing.

Belongs to the multi antimicrobial extrusion (MATE) (TC 2.A.66.1) family. MdtK subfamily.

The protein resides in the cell inner membrane. Multidrug efflux pump that functions probably as a Na(+)/drug antiporter. The sequence is that of Multidrug resistance protein MdtK from Shigella flexneri serotype 5b (strain 8401).